The sequence spans 175 residues: SKP1-like protein 20 (175 aa).

The interval 117 to 175 (ILAANYLNIKGLLDLTCQTVADMIKGKTPEEIRKTFNIKNDFTPEEEEEVRRENQWAFE) is interaction with the F-box domain of F-box proteins.

The protein belongs to the SKP1 family. Part of a SCF (SKP1-CUL1-F-box protein) E3 ubiquitin-protein ligase complex. Interacts with rice black streaked dwarf virus RBSDV protein P7-2. Is able to form the SCF complex together with CUL1 and the viral P7-2 protein. Interacts with D3.

The protein resides in the nucleus. It functions in the pathway protein modification; protein ubiquitination. Functionally, involved in ubiquitination and subsequent proteasomal degradation of target proteins. Together with CUL1, a RING-box and a F-box protein, it forms a SCF E3 ubiquitin ligase complex. The functional specificity of this complex depends on the type of F-box protein. In the SCF complex, it serves as an adapter that links the F-box protein to CUL1. The protein is SKP1-like protein 20 of Oryza sativa subsp. japonica (Rice).